The following is a 272-amino-acid chain: sn-1 stearoyl-lipid 9-desaturase (272 aa).

A run of 2 helical transmembrane segments spans residues 11 to 31 (INWV…FAFI) and 39 to 59 (AVGV…TLGF). Residues 60–65 (HRLVTH) carry the Histidine box-1 motif. Residues 97-101 (HRIHH) carry the Histidine box-2 motif. A helical transmembrane segment spans residues 160 to 180 (IALGLLLLYLGGWSFVVWGVF). The Histidine box-3 signature appears at 230 to 234 (HHAFQ).

It belongs to the fatty acid desaturase type 2 family. It depends on Fe(2+) as a cofactor.

The protein resides in the membrane. The catalysed reaction is a 1-octadecanoyl 2-acyl-glycerolipid + 2 reduced [2Fe-2S]-[ferredoxin] + O2 + 2 H(+) = a 1-[(9Z)-octadecenoyl]-2-acyl-glycerolipid + 2 oxidized [2Fe-2S]-[ferredoxin] + 2 H2O. Its pathway is lipid metabolism; polyunsaturated fatty acid biosynthesis. In terms of biological role, desaturase involved in fatty acid biosynthesis. Introduces a double bond at carbon 9 of stearoyl groups (18:0) attached to the sn-1 position of the glycerol moiety of membrane glycerolipids. Does not desaturate palmitic acid (16:0), palmitoleic acid (16:1) and cis-vaccenic acid (18:1). This Anabaena variabilis protein is sn-1 stearoyl-lipid 9-desaturase.